The sequence spans 368 residues: Aminomethyltransferase (368 aa).

The protein belongs to the GcvT family. The glycine cleavage system is composed of four proteins: P, T, L and H.

It carries out the reaction N(6)-[(R)-S(8)-aminomethyldihydrolipoyl]-L-lysyl-[protein] + (6S)-5,6,7,8-tetrahydrofolate = N(6)-[(R)-dihydrolipoyl]-L-lysyl-[protein] + (6R)-5,10-methylene-5,6,7,8-tetrahydrofolate + NH4(+). In terms of biological role, the glycine cleavage system catalyzes the degradation of glycine. The chain is Aminomethyltransferase from Xylella fastidiosa (strain 9a5c).